Consider the following 944-residue polypeptide: Valine--tRNA ligase (944 aa).

The short motif at 43–53 (PNVTGTLHMGH) is the 'HIGH' region element. The 'KMSKS' region motif lies at 550 to 554 (KMSKS). Lysine 553 contacts ATP. A coiled-coil region spans residues 878–944 (LVDMDAERTR…TGLREQRAKL (67 aa)).

Belongs to the class-I aminoacyl-tRNA synthetase family. ValS type 1 subfamily. As to quaternary structure, monomer.

It is found in the cytoplasm. It carries out the reaction tRNA(Val) + L-valine + ATP = L-valyl-tRNA(Val) + AMP + diphosphate. Functionally, catalyzes the attachment of valine to tRNA(Val). As ValRS can inadvertently accommodate and process structurally similar amino acids such as threonine, to avoid such errors, it has a 'posttransfer' editing activity that hydrolyzes mischarged Thr-tRNA(Val) in a tRNA-dependent manner. The sequence is that of Valine--tRNA ligase from Xanthomonas campestris pv. campestris (strain 8004).